A 226-amino-acid polypeptide reads, in one-letter code: 7-cyano-7-deazaguanine synthase (226 aa).

10–20 (FSGGQDSTTLA) lines the ATP pocket. Residues Cys190, Cys205, Cys208, and Cys211 each coordinate Zn(2+).

Belongs to the QueC family. Zn(2+) serves as cofactor.

It carries out the reaction 7-carboxy-7-deazaguanine + NH4(+) + ATP = 7-cyano-7-deazaguanine + ADP + phosphate + H2O + H(+). Its pathway is purine metabolism; 7-cyano-7-deazaguanine biosynthesis. Functionally, catalyzes the ATP-dependent conversion of 7-carboxy-7-deazaguanine (CDG) to 7-cyano-7-deazaguanine (preQ(0)). In Helicobacter pylori (strain ATCC 700392 / 26695) (Campylobacter pylori), this protein is 7-cyano-7-deazaguanine synthase.